Reading from the N-terminus, the 268-residue chain is MAELDIGQHCQVEHCRQRDFLPFVCDDCSGIFCLEHRSRESHGCPEVTVINERLKTDQHTSYPCSFKDCAERELVAVICPYCEKNFCLRHRHQSDHECEKLEIPKPRMAATQKLVKDIIDSKTGETASKRWKGAKNSETAAKVALMKLKMHADGDKSLPQTERIYFQVFLPKGSKEKSKPMFFCHRWSIGKAIDFAASLARLKNDNNKFTAKKLRLCHITSGEALPLDHTLETWIAKEDCPLYNGGNIILEYLNDEEQFCKNVESYLE.

Alanine 2 is modified (N-acetylalanine). 2 consecutive AN1-type zinc fingers follow at residues 4 to 52 and 58 to 106; these read LDIG…VINE and QHTS…IPKP. Zn(2+) contacts are provided by cysteine 10, cysteine 15, cysteine 25, cysteine 28, cysteine 33, histidine 36, histidine 42, cysteine 44, cysteine 64, cysteine 69, cysteine 79, cysteine 82, cysteine 87, histidine 90, histidine 96, and cysteine 98. A ubiquitin-like region spans residues 160 to 260; sequence QTERIYFQVF…EYLNDEEQFC (101 aa).

As to quaternary structure, associates with the 26S proteasome; this association occurs upon exposure to arsenite and is reduced in the presence of ATP. Interacts (via AN1-type 1 and 2 zinc fingers) with PSMD1; this interaction is increased upon arsenite treatment and occurs in an ATP-independent manner. Interacts with PSMC4. Interacts with PSMA1. Interacts (via its ubiquitin-like region) with VCP; this interaction occurs in an arsenite-dependent manner and is necessary for the recruitment of the ubiquitin-selective ATPase VCP to stress granules (SGs).

The protein resides in the cytoplasm. It localises to the stress granule. Functionally, plays a role in the regulation of cytoplasmic stress granules (SGs) turnover. SGs are dynamic and transient cytoplasmic ribonucleoprotein assemblies important for cellular protein homeostasis when protein production is suspended after acute exogenous stress. Associates with SGs and is involved in the efficient and specific arsenite-induced clearance process of SGs through the recruitment of the ubiquitin-selective ATPase VCP and the 26S proteasome. This process requires both complexes for efficient degradation of damaged ubiquitinated SG proteins during recovery from arsenite stress, and hence avoiding aberrant cytoplasmic SGs degradation via autophagy. The chain is AN1-type zinc finger protein 1 from Homo sapiens (Human).